Consider the following 412-residue polypeptide: MTPSISWGLLLLAGLFCLVPSFLAEDVQETDTSRRDSVPASHDTPYNLELSISLYRELGHKSTTSNIFFSQVSIATAFAMLSLGEKGDTHTQILEGLQFNLTQTSEADIHKAFQHLLQTLNRPDSELQLSTGNGSLLNNDLKLVEKFLEEAKNNYHSEVFSVNFAESEEAKKVINDFVEKGTQGKIAEAVKDPDEDTVFALANYILFKGKWKKPFDPKHTEEAEFHVDTVTTVKVPMMTLTGMLDVHHCSTLSSWVLLMDYLGNRTAVFLLPDDGKMQHLEQTLNKELISKFLLNRHRRLAQVHLPRLSLSGNYTLNTLMSHLGITRIFNNGADLSGITEENAPLKLSKAADKAVLTMDETGTEAAAATVLQAVPMSMPPILNFNKPFIFIIVEEHTQSPLFVGKVVDPTRK.

An N-terminal signal peptide occupies residues 1-24; the sequence is MTPSISWGLLLLAGLFCLVPSFLA. At S33 the chain carries Phosphoserine. Residues N100, N133, N264, and N313 are each glycosylated (N-linked (GlcNAc...) asparagine). An RCL region spans residues 367 to 386; it reads AATVLQAVPMSMPPILNFNK. S377 is modified (phosphoserine).

It belongs to the serpin family. As to quaternary structure, interacts with CELA2A. Interacts with ERGIC3 and LMAN1/ERGIC53. Interacts with PRSS1/Trypsin. Expressed not only in liver but also in kidney tubule cells, where it is regulated by androgens during development.

Its subcellular location is the secreted. Inhibitor of serine proteases. Its primary target is elastase, but it also has a moderate affinity for plasmin and thrombin. This chain is Alpha-1-antiproteinase (Serpina1), found in Mus caroli (Ryukyu mouse).